Here is a 481-residue protein sequence, read N- to C-terminus: Sulfate adenylyltransferase subunit 1 (481 aa).

A tr-type G domain is found at 22–236 (KDLLRFITCG…LLDSIRLDAD (215 aa)). A G1 region spans residues 31 to 38 (GSVDDGKS). GTP is bound at residue 31–38 (GSVDDGKS). The interval 89-93 (GITID) is G2. Residues 110–113 (DCPG) form a G3 region. GTP contacts are provided by residues 110 to 114 (DCPGH) and 165 to 168 (NKMD). Positions 165–168 (NKMD) are G4. A G5 region spans residues 202–204 (SAL).

The protein belongs to the TRAFAC class translation factor GTPase superfamily. Classic translation factor GTPase family. CysN/NodQ subfamily. Heterodimer composed of CysD, the smaller subunit, and CysN.

It catalyses the reaction sulfate + ATP + H(+) = adenosine 5'-phosphosulfate + diphosphate. It functions in the pathway sulfur metabolism; hydrogen sulfide biosynthesis; sulfite from sulfate: step 1/3. In terms of biological role, with CysD forms the ATP sulfurylase (ATPS) that catalyzes the adenylation of sulfate producing adenosine 5'-phosphosulfate (APS) and diphosphate, the first enzymatic step in sulfur assimilation pathway. APS synthesis involves the formation of a high-energy phosphoric-sulfuric acid anhydride bond driven by GTP hydrolysis by CysN coupled to ATP hydrolysis by CysD. This Laribacter hongkongensis (strain HLHK9) protein is Sulfate adenylyltransferase subunit 1.